The primary structure comprises 234 residues: Leucyl/phenylalanyl-tRNA--protein transferase (234 aa).

The protein belongs to the L/F-transferase family.

The protein localises to the cytoplasm. It catalyses the reaction N-terminal L-lysyl-[protein] + L-leucyl-tRNA(Leu) = N-terminal L-leucyl-L-lysyl-[protein] + tRNA(Leu) + H(+). The catalysed reaction is N-terminal L-arginyl-[protein] + L-leucyl-tRNA(Leu) = N-terminal L-leucyl-L-arginyl-[protein] + tRNA(Leu) + H(+). The enzyme catalyses L-phenylalanyl-tRNA(Phe) + an N-terminal L-alpha-aminoacyl-[protein] = an N-terminal L-phenylalanyl-L-alpha-aminoacyl-[protein] + tRNA(Phe). Functions in the N-end rule pathway of protein degradation where it conjugates Leu, Phe and, less efficiently, Met from aminoacyl-tRNAs to the N-termini of proteins containing an N-terminal arginine or lysine. The polypeptide is Leucyl/phenylalanyl-tRNA--protein transferase (Escherichia coli O45:K1 (strain S88 / ExPEC)).